We begin with the raw amino-acid sequence, 56 residues long: UPF0391 membrane protein Rru_A0119 (56 aa).

Transmembrane regions (helical) follow at residues 4–24 (WALI…GGIA) and 30–50 (IAQI…IMHF).

The protein belongs to the UPF0391 family.

It localises to the cell membrane. This chain is UPF0391 membrane protein Rru_A0119, found in Rhodospirillum rubrum (strain ATCC 11170 / ATH 1.1.1 / DSM 467 / LMG 4362 / NCIMB 8255 / S1).